We begin with the raw amino-acid sequence, 542 residues long: Esterase S (542 aa).

A signal peptide spans 1–22 (MTQILLPIALLCLFAASTLSNP). A disulfide bond links C81 and C100. Residue N110 is glycosylated (N-linked (GlcNAc...) asparagine). The active-site Acyl-ester intermediate is S204. The cysteines at positions 256 and 268 are disulfide-linked. N396 is a glycosylation site (N-linked (GlcNAc...) asparagine). Residues C507 and C528 are joined by a disulfide bond.

The protein belongs to the type-B carboxylesterase/lipase family. As to quaternary structure, monomer. Specifically expressed in the ejaculatory bulbs of male.

It localises to the secreted. The enzyme catalyses a carboxylic ester + H2O = an alcohol + a carboxylate + H(+). In terms of biological role, transferred from the ejaculatory bulbs of males to the female genitals upon copulation, plays an important role in the reproductive biology. The protein is Esterase S (EstS) of Drosophila virilis (Fruit fly).